A 94-amino-acid polypeptide reads, in one-letter code: Protein canopy homolog 1 (94 aa).

It belongs to the canopy family.

The polypeptide is Protein canopy homolog 1 (Cnpy1) (Mus musculus (Mouse)).